The following is a 349-amino-acid chain: Anthranilate phosphoribosyltransferase (349 aa).

5-phospho-alpha-D-ribose 1-diphosphate-binding positions include Gly84, 87-88 (GD), Thr92, 94-97 (NIST), 112-120 (KHGNRAASS), and Ser124. Gly84 lines the anthranilate pocket. Ser96 serves as a coordination point for Mg(2+). Asn115 contributes to the anthranilate binding site. Arg170 contacts anthranilate. Mg(2+) contacts are provided by Asp228 and Glu229.

Belongs to the anthranilate phosphoribosyltransferase family. In terms of assembly, homodimer. Requires Mg(2+) as cofactor.

The catalysed reaction is N-(5-phospho-beta-D-ribosyl)anthranilate + diphosphate = 5-phospho-alpha-D-ribose 1-diphosphate + anthranilate. Its pathway is amino-acid biosynthesis; L-tryptophan biosynthesis; L-tryptophan from chorismate: step 2/5. Its function is as follows. Catalyzes the transfer of the phosphoribosyl group of 5-phosphorylribose-1-pyrophosphate (PRPP) to anthranilate to yield N-(5'-phosphoribosyl)-anthranilate (PRA). The sequence is that of Anthranilate phosphoribosyltransferase from Leifsonia xyli subsp. xyli (strain CTCB07).